Reading from the N-terminus, the 375-residue chain is tRNA-specific 2-thiouridylase MnmA (375 aa).

ATP is bound by residues 9–16 and Leu-35; that span reads AMSGGVDS. The active-site Nucleophile is the Cys-105. An intrachain disulfide couples Cys-105 to Cys-201. An ATP-binding site is contributed by Gly-129. The segment at 151-153 is interaction with tRNA; that stretch reads KNQ. Cys-201 serves as the catalytic Cysteine persulfide intermediate. The interaction with tRNA stretch occupies residues 307–308; it reads RY.

This sequence belongs to the MnmA/TRMU family.

The protein localises to the cytoplasm. It carries out the reaction S-sulfanyl-L-cysteinyl-[protein] + uridine(34) in tRNA + AH2 + ATP = 2-thiouridine(34) in tRNA + L-cysteinyl-[protein] + A + AMP + diphosphate + H(+). Catalyzes the 2-thiolation of uridine at the wobble position (U34) of tRNA, leading to the formation of s(2)U34. In Leptospira interrogans serogroup Icterohaemorrhagiae serovar copenhageni (strain Fiocruz L1-130), this protein is tRNA-specific 2-thiouridylase MnmA.